The following is a 515-amino-acid chain: ATP synthase subunit alpha (515 aa).

ATP is bound at residue 171 to 178; it reads GDRQTGKT.

It belongs to the ATPase alpha/beta chains family. As to quaternary structure, F-type ATPases have 2 components, CF(1) - the catalytic core - and CF(0) - the membrane proton channel. CF(1) has five subunits: alpha(3), beta(3), gamma(1), delta(1), epsilon(1). CF(0) has three main subunits: a(1), b(2) and c(9-12). The alpha and beta chains form an alternating ring which encloses part of the gamma chain. CF(1) is attached to CF(0) by a central stalk formed by the gamma and epsilon chains, while a peripheral stalk is formed by the delta and b chains.

Its subcellular location is the cell inner membrane. It catalyses the reaction ATP + H2O + 4 H(+)(in) = ADP + phosphate + 5 H(+)(out). Functionally, produces ATP from ADP in the presence of a proton gradient across the membrane. The alpha chain is a regulatory subunit. The polypeptide is ATP synthase subunit alpha (Stenotrophomonas maltophilia (strain R551-3)).